The chain runs to 258 residues: Phosphate import ATP-binding protein PstB (258 aa).

Residues 12–253 enclose the ABC transporter domain; that stretch reads LEVKNLNFYY…PARKETEDYI (242 aa). 44-51 lines the ATP pocket; sequence GPSGCGKS.

It belongs to the ABC transporter superfamily. Phosphate importer (TC 3.A.1.7) family. In terms of assembly, the complex is composed of two ATP-binding proteins (PstB), two transmembrane proteins (PstC and PstA) and a solute-binding protein (PstS).

It is found in the cell inner membrane. The enzyme catalyses phosphate(out) + ATP + H2O = ADP + 2 phosphate(in) + H(+). Part of the ABC transporter complex PstSACB involved in phosphate import. Responsible for energy coupling to the transport system. The polypeptide is Phosphate import ATP-binding protein PstB (Bordetella pertussis (strain Tohama I / ATCC BAA-589 / NCTC 13251)).